Reading from the N-terminus, the 132-residue chain is Small ribosomal subunit protein uS11 (132 aa).

This sequence belongs to the universal ribosomal protein uS11 family. As to quaternary structure, part of the 30S ribosomal subunit.

Its function is as follows. Located on the platform of the 30S subunit. This is Small ribosomal subunit protein uS11 from Sulfolobus acidocaldarius (strain ATCC 33909 / DSM 639 / JCM 8929 / NBRC 15157 / NCIMB 11770).